The primary structure comprises 154 residues: Transcriptional repressor NrdR (154 aa).

A zinc finger spans residues 3 to 34 (CPTCKYNGTRVVDSRPADDGNSIRRRRECEKC). The ATP-cone domain occupies 49–139 (LIVVKKDGAR…VYRQFKDISV (91 aa)).

It belongs to the NrdR family. Zn(2+) is required as a cofactor.

Its function is as follows. Negatively regulates transcription of bacterial ribonucleotide reductase nrd genes and operons by binding to NrdR-boxes. This chain is Transcriptional repressor NrdR, found in Listeria welshimeri serovar 6b (strain ATCC 35897 / DSM 20650 / CCUG 15529 / CIP 8149 / NCTC 11857 / SLCC 5334 / V8).